Reading from the N-terminus, the 317-residue chain is WSCD family member CG9164 (317 aa).

Residues 8–28 (FFGVSATIIIYIGGVLFLSMN) form a helical membrane-spanning segment. N-linked (GlcNAc...) asparagine glycans are attached at residues Asn151, Asn227, and Asn233.

Belongs to the WSCD family.

The protein resides in the membrane. This Drosophila melanogaster (Fruit fly) protein is WSCD family member CG9164.